The primary structure comprises 151 residues: Putative pre-16S rRNA nuclease (151 aa).

It belongs to the YqgF nuclease family.

The protein localises to the cytoplasm. Functionally, could be a nuclease involved in processing of the 5'-end of pre-16S rRNA. The sequence is that of Putative pre-16S rRNA nuclease from Nitrosospira multiformis (strain ATCC 25196 / NCIMB 11849 / C 71).